Consider the following 335-residue polypeptide: Foldase protein PrsA (335 aa).

Residues 1–22 form the signal peptide; that stretch reads MRSAKKLLSVLCLGVFILTFTA. A lipid anchor (N-palmitoyl cysteine) is attached at C23. C23 carries the S-diacylglycerol cysteine lipid modification. Residues 194–285 enclose the PpiC domain; the sequence is PNTMNVSHIL…FGYHIIKINS (92 aa).

Belongs to the PrsA family.

The protein resides in the cell membrane. The catalysed reaction is [protein]-peptidylproline (omega=180) = [protein]-peptidylproline (omega=0). Its function is as follows. Plays a major role in protein secretion by helping the post-translocational extracellular folding of several secreted proteins. The sequence is that of Foldase protein PrsA from Clostridium botulinum (strain Loch Maree / Type A3).